Reading from the N-terminus, the 114-residue chain is PDZK1-interacting protein 1 (114 aa).

Topologically, residues Met-1–Gln-28 are extracellular. The chain crosses the membrane as a helical span at residues Pro-29–Asn-51. The Cytoplasmic segment spans residues His-52 to Met-114. Residue Ser-85 is modified to Phosphoserine. A disordered region spans residues His-95–Met-114. Residues Glu-105–Met-114 are compositionally biased toward basic and acidic residues.

The protein belongs to the PDZK1-interacting protein 1/SMIM24 family. Forms a heterodimer (via N-terminal transmembrane helix) with SLC5A2/SGLT2 (via TM13); this interaction enhances SLC5A2 transporter activity. Interacts with PDZK1.

The protein resides in the apical cell membrane. Functionally, auxiliary protein of electrogenic Na(+)-coupled sugar symporter SLC5A2/SGLT2 and SLC5A1/SGLT1. Essential for the transporter activity of SLC5A2/SGLT2 but not SLC5A1/SGLT1. The sequence is that of PDZK1-interacting protein 1 from Pongo abelii (Sumatran orangutan).